Here is a 397-residue protein sequence, read N- to C-terminus: G2/mitotic-specific cyclin-B1 (397 aa).

This sequence belongs to the cyclin family. Cyclin AB subfamily. As to quaternary structure, interacts with the cdc2 protein kinase to form a serine/threonine kinase holoenzyme complex also known as maturation promoting factor (MPF). The cyclin subunit imparts substrate specificity to the complex. When not in a complex with cdc2, interacts with spdya. Interacts with nap1l1. Interacts with nanos1.

The protein localises to the cytoplasm. It is found in the cytoskeleton. The protein resides in the microtubule organizing center. Its subcellular location is the centrosome. It localises to the nucleus. Functionally, essential for the control of the cell cycle at the G2/M (mitosis) transition. This is G2/mitotic-specific cyclin-B1 (ccnb1) from Xenopus laevis (African clawed frog).